Here is a 730-residue protein sequence, read N- to C-terminus: Translation initiation factor IF-2 (730 aa).

Residues 48–151 (GNGNQKQGGS…NKAKPLPEKV (104 aa)) are disordered. Basic and acidic residues-rich tracts occupy residues 61–77 (EQQKKAGEKKPAQDHGQ) and 89–104 (NQHDRSQGSDQQKGKA). Residues 110 to 123 (KPKHKGNKNKKQHQ) show a composition bias toward basic residues. A compositionally biased stretch (basic and acidic residues) spans 137–148 (RQPEMNKAKPLP). A tr-type G domain is found at 231-400 (ERPPVVTIMG…LLVAEVEELK (170 aa)). Positions 240–247 (GHVDHGKT) are G1. GTP is bound at residue 240 to 247 (GHVDHGKT). The segment at 265 to 269 (GITQH) is G2. The G3 stretch occupies residues 286–289 (DTPG). Residues 286–290 (DTPGH) and 340–343 (NKMD) contribute to the GTP site. A G4 region spans residues 340–343 (NKMD). The interval 376 to 378 (SAL) is G5.

The protein belongs to the TRAFAC class translation factor GTPase superfamily. Classic translation factor GTPase family. IF-2 subfamily.

It is found in the cytoplasm. One of the essential components for the initiation of protein synthesis. Protects formylmethionyl-tRNA from spontaneous hydrolysis and promotes its binding to the 30S ribosomal subunits. Also involved in the hydrolysis of GTP during the formation of the 70S ribosomal complex. This Halalkalibacterium halodurans (strain ATCC BAA-125 / DSM 18197 / FERM 7344 / JCM 9153 / C-125) (Bacillus halodurans) protein is Translation initiation factor IF-2.